Reading from the N-terminus, the 213-residue chain is RNA pyrophosphohydrolase (213 aa).

Positions 6–149 (GFRPNVGIVL…KRGVYEIALT (144 aa)) constitute a Nudix hydrolase domain. A Nudix box motif is present at residues 38–59 (GGIDRGETPEQAMIRELHEEVG). Residues 185–213 (NFELPPGGSFEPNPQTSYGLDASGKPHET) form a disordered region.

It belongs to the Nudix hydrolase family. RppH subfamily. A divalent metal cation serves as cofactor.

Its function is as follows. Accelerates the degradation of transcripts by removing pyrophosphate from the 5'-end of triphosphorylated RNA, leading to a more labile monophosphorylated state that can stimulate subsequent ribonuclease cleavage. This chain is RNA pyrophosphohydrolase, found in Albidiferax ferrireducens (strain ATCC BAA-621 / DSM 15236 / T118) (Rhodoferax ferrireducens).